The following is a 350-amino-acid chain: Uroporphyrinogen decarboxylase (350 aa).

Substrate is bound by residues 28 to 32, aspartate 78, tyrosine 155, serine 210, and histidine 325; that span reads RQAGR.

This sequence belongs to the uroporphyrinogen decarboxylase family. As to quaternary structure, homodimer.

The protein resides in the cytoplasm. It carries out the reaction uroporphyrinogen III + 4 H(+) = coproporphyrinogen III + 4 CO2. Its pathway is porphyrin-containing compound metabolism; protoporphyrin-IX biosynthesis; coproporphyrinogen-III from 5-aminolevulinate: step 4/4. Catalyzes the decarboxylation of four acetate groups of uroporphyrinogen-III to yield coproporphyrinogen-III. This Microcystis aeruginosa (strain NIES-843 / IAM M-2473) protein is Uroporphyrinogen decarboxylase.